The primary structure comprises 129 residues: MNSSTALMCFALLLISPLCMGYSDEDREADSRRIGEIIQNAQDDDSKINSTQELLDIYRRLYPSLSLEDRENIDKFVNEHTDAIVIDGVPIQGGRKAKIIGKIVSPAAKGLAVGFFEELGSKIAQLFTG.

The first 21 residues, 1–21 (MNSSTALMCFALLLISPLCMG), serve as a signal peptide directing secretion. Residue asparagine 49 is glycosylated (N-linked (GlcNAc...) asparagine).

This sequence belongs to the Turandot family.

It localises to the secreted. Its function is as follows. A humoral factor that plays a role in stress tolerance; gives increased resistance to the lethal effects of bacterial challenge and stress. Regulated by the JAK/STAT pathway and NF-KB-like Relish pathway in the fat body, upd3 in the hemocytes and Mekk1 in response to septic injury and consequent immune response. The protein is Protein Turandot A1 (TotA1) of Drosophila simulans (Fruit fly).